Here is a 270-residue protein sequence, read N- to C-terminus: High choriolytic enzyme 1 (270 aa).

A signal peptide spans 1 to 20; it reads MNLAPSTCLLLLFLLDIAQA. A propeptide spans 21–70 (activation peptide); sequence LPVWDEEGHEEGHEEGDGDDFVDITTRILTSNNNTDQLLLEGDLVAPTNR. Asparagine 53 is a glycosylation site (N-linked (GlcNAc...) asparagine). In terms of domain architecture, Peptidase M12A spans 71 to 270; sequence NAMKCWSSSC…TRINVLYNCR (200 aa). Cystine bridges form between cysteine 75–cysteine 80, cysteine 120–cysteine 269, and cysteine 141–cysteine 161. Residue histidine 169 coordinates Zn(2+). Glutamate 170 is a catalytic residue. Residues histidine 173 and histidine 179 each coordinate Zn(2+).

Zn(2+) is required as a cofactor.

The protein resides in the zymogen granule. The catalysed reaction is Hydrolysis of the inner layer of fish egg envelope. Also hydrolysis of casein and small molecule substrates such as succinyl-Leu-Leu-Val-Tyr-|-7-(4-methyl)coumarylamide.. In terms of biological role, participates in the breakdown of the egg envelope, which is derived from the egg extracellular matrix, at the time of hatching. Thus allowing the newly hatched fish to swim free. HCE binds tightly to the egg envelope while it exerts the choriolytic swelling action. The polypeptide is High choriolytic enzyme 1 (hcea) (Oryzias latipes (Japanese rice fish)).